The following is a 103-amino-acid chain: Large ribosomal subunit protein bL21 (103 aa).

It belongs to the bacterial ribosomal protein bL21 family. In terms of assembly, part of the 50S ribosomal subunit. Contacts protein L20.

This protein binds to 23S rRNA in the presence of protein L20. The protein is Large ribosomal subunit protein bL21 of Mycobacterium marinum (strain ATCC BAA-535 / M).